The following is an 83-amino-acid chain: Small ribosomal subunit protein eS21 (83 aa).

The protein belongs to the eukaryotic ribosomal protein eS21 family. In terms of assembly, component of the 40S small ribosomal subunit.

It localises to the cytoplasm. The protein localises to the cytosol. Its subcellular location is the rough endoplasmic reticulum. The polypeptide is Small ribosomal subunit protein eS21 (RpS21) (Spodoptera frugiperda (Fall armyworm)).